The sequence spans 75 residues: U6-lycotoxin-Ls1b (75 aa).

A signal peptide spans 1–21 (MKLLLFTALVLVVISLIEVEA). Positions 22–25 (ENER) are excised as a propeptide.

It belongs to the neurotoxin 19 (CSTX) family. 06 (U6-Lctx) subfamily. Contains 4 disulfide bonds. Expressed by the venom gland.

The protein resides in the secreted. This chain is U6-lycotoxin-Ls1b, found in Lycosa singoriensis (Wolf spider).